A 337-amino-acid chain; its full sequence is GTP 3',8-cyclase (337 aa).

The Radical SAM core domain occupies 17–243 (PFQRQYYYLR…HKSHTDGPAK (227 aa)). Arg-26 is a binding site for GTP. [4Fe-4S] cluster is bound by residues Cys-33 and Cys-37. Position 39 (Tyr-39) interacts with S-adenosyl-L-methionine. Cys-40 serves as a coordination point for [4Fe-4S] cluster. A GTP-binding site is contributed by Arg-76. Gly-80 is a binding site for S-adenosyl-L-methionine. GTP is bound at residue Thr-107. Ser-131 is an S-adenosyl-L-methionine binding site. A GTP-binding site is contributed by Lys-168. Position 202 (Met-202) interacts with S-adenosyl-L-methionine. Residues Cys-265 and Cys-268 each contribute to the [4Fe-4S] cluster site. A GTP-binding site is contributed by 270-272 (RLR). Cys-282 is a [4Fe-4S] cluster binding site.

This sequence belongs to the radical SAM superfamily. MoaA family. In terms of assembly, monomer and homodimer. [4Fe-4S] cluster is required as a cofactor.

It catalyses the reaction GTP + AH2 + S-adenosyl-L-methionine = (8S)-3',8-cyclo-7,8-dihydroguanosine 5'-triphosphate + 5'-deoxyadenosine + L-methionine + A + H(+). Its pathway is cofactor biosynthesis; molybdopterin biosynthesis. In terms of biological role, catalyzes the cyclization of GTP to (8S)-3',8-cyclo-7,8-dihydroguanosine 5'-triphosphate. This is GTP 3',8-cyclase from Haemophilus influenzae (strain PittGG).